The following is a 93-amino-acid chain: UPF0337 protein Bd3330 (93 aa).

It belongs to the UPF0337 (CsbD) family.

This Bdellovibrio bacteriovorus (strain ATCC 15356 / DSM 50701 / NCIMB 9529 / HD100) protein is UPF0337 protein Bd3330.